The following is a 79-amino-acid chain: Hematopoietic cell signal transducer (79 aa).

Residues 1 to 18 (MAPPGGILFLLLLPVAAA) form the signal peptide. Residues 19–35 (QVTSGSCSGCGPLSLPL) are Extracellular-facing. Residues 36 to 56 (LAGLVAADAVVSLLIVVGVFV) traverse the membrane as a helical segment. Residues 57–79 (CGRPRSRPTQEDGKIYINMPGRG) lie on the Cytoplasmic side of the membrane. Residue Tyr-72 is modified to Phosphotyrosine. The interval 72–74 (YIN) is GRB2 binding site. Positions 72–75 (YINM) are PIK3R1 binding site.

The protein belongs to the DAP10 family. In terms of assembly, homodimer; Disulfide-linked. Heterohexamer composed of four subunits of HCST/DAP10 and two subunits of KLRK1. Interacts (via transmembrane domain) with KLRK1 (via transmembrane domain); the interaction is required for KLRK1 NK cell surface and induces NK cell-mediated cytotoxicity. Interacts with PIK3R1 and GRB2. Interacts with CLEC5A. Forms an CLEC5A/TYROBP/HCST trimolecular complex depending almost solely on TYROBP. Interacts with KLRK1. Interacts with CD300H. Post-translationally, phosphorylated; PIK3R1 and GRB2 associate specifically with tyrosine-phosphorylated HCST. In terms of processing, O-glycosylated. In terms of tissue distribution, expressed predominantly in lymphohematopoietic tissues.

Its subcellular location is the membrane. Its function is as follows. Transmembrane adapter protein which associates with KLRK1 to form an activation receptor KLRK1-HCST in lymphoid and myeloid cells; this receptor plays a major role in triggering cytotoxicity against target cells expressing cell surface ligands such as MHC class I chain-related MICA and MICB, and UL16-binding proteins (ULBPs); these ligands are up-regulated by stress conditions and pathological state such as viral infection and tumor transformation. Functions as a docking site for PI3-kinase PIK3R1 and GRB2. Interaction of ULBPs with KLRK1-HCST triggers calcium mobilization and activation of the PIK3R1, MAP2K/ERK, and JAK2/STAT5 signaling pathways. Both PIK3R1 and GRB2 are required for full KLRK1-HCST-mediated activation and ultimate killing of target cells. In NK cells, KLRK1-HCST signaling directly induces cytotoxicity and enhances cytokine production initiated via DAP12/TYROBP-associated receptors. In T-cells, it provides primarily costimulation for TCR-induced signals. KLRK1-HCST receptor plays a role in immune surveillance against tumors and is required for cytolysis of tumors cells; indeed, melanoma cells that do not express KLRK1 ligands escape from immune surveillance mediated by NK cells. The sequence is that of Hematopoietic cell signal transducer (HCST) from Sus scrofa (Pig).